The primary structure comprises 253 residues: Glutamate racemase (253 aa).

Substrate contacts are provided by residues 7–8 (DS) and 39–40 (YG). Cysteine 70 (proton donor/acceptor) is an active-site residue. 71–72 (NS) is a binding site for substrate. The active-site Proton donor/acceptor is cysteine 179. 180–181 (TH) provides a ligand contact to substrate.

Belongs to the aspartate/glutamate racemases family.

The enzyme catalyses L-glutamate = D-glutamate. The protein operates within cell wall biogenesis; peptidoglycan biosynthesis. Its function is as follows. Provides the (R)-glutamate required for cell wall biosynthesis. The chain is Glutamate racemase from Nitratiruptor sp. (strain SB155-2).